Reading from the N-terminus, the 297-residue chain is Nucleotide-binding protein Bphyt_0592 (297 aa).

Residue 8 to 15 (GISGSGKS) participates in ATP binding. 57 to 60 (DARS) serves as a coordination point for GTP.

This sequence belongs to the RapZ-like family.

Displays ATPase and GTPase activities. In Paraburkholderia phytofirmans (strain DSM 17436 / LMG 22146 / PsJN) (Burkholderia phytofirmans), this protein is Nucleotide-binding protein Bphyt_0592.